The primary structure comprises 391 residues: Chaperone protein DnaJ (391 aa).

The J domain occupies 6–70 (DYYEILEVSR…EKRKLYDTYG (65 aa)). Residues 145–226 (GCIKNVKYTR…CKSRRMVDEV (82 aa)) form a CR-type zinc finger. Residues Cys-158, Cys-161, Cys-174, Cys-177, Cys-200, Cys-203, Cys-214, and Cys-217 each contribute to the Zn(2+) site. CXXCXGXG motif repeat units lie at residues 158–165 (CPDCNGSG), 174–181 (CSDCNGEG), 200–207 (CPSCKGEG), and 214–221 (CKKCKSRR).

The protein belongs to the DnaJ family. As to quaternary structure, homodimer. Zn(2+) serves as cofactor.

It localises to the cytoplasm. Functionally, participates actively in the response to hyperosmotic and heat shock by preventing the aggregation of stress-denatured proteins and by disaggregating proteins, also in an autonomous, DnaK-independent fashion. Unfolded proteins bind initially to DnaJ; upon interaction with the DnaJ-bound protein, DnaK hydrolyzes its bound ATP, resulting in the formation of a stable complex. GrpE releases ADP from DnaK; ATP binding to DnaK triggers the release of the substrate protein, thus completing the reaction cycle. Several rounds of ATP-dependent interactions between DnaJ, DnaK and GrpE are required for fully efficient folding. Also involved, together with DnaK and GrpE, in the DNA replication of plasmids through activation of initiation proteins. The chain is Chaperone protein DnaJ from Mycoplasmoides gallisepticum (strain R(low / passage 15 / clone 2)) (Mycoplasma gallisepticum).